Here is a 451-residue protein sequence, read N- to C-terminus: Probable glycine dehydrogenase (decarboxylating) subunit 1 (451 aa).

It belongs to the GcvP family. N-terminal subunit subfamily. The glycine cleavage system is composed of four proteins: P, T, L and H. In this organism, the P 'protein' is a heterodimer of two subunits.

It carries out the reaction N(6)-[(R)-lipoyl]-L-lysyl-[glycine-cleavage complex H protein] + glycine + H(+) = N(6)-[(R)-S(8)-aminomethyldihydrolipoyl]-L-lysyl-[glycine-cleavage complex H protein] + CO2. Functionally, the glycine cleavage system catalyzes the degradation of glycine. The P protein binds the alpha-amino group of glycine through its pyridoxal phosphate cofactor; CO(2) is released and the remaining methylamine moiety is then transferred to the lipoamide cofactor of the H protein. The protein is Probable glycine dehydrogenase (decarboxylating) subunit 1 of Staphylococcus aureus (strain MSSA476).